The primary structure comprises 450 residues: Glucose-6-phosphate isomerase (450 aa).

A Phosphothreonine modification is found at threonine 38. Catalysis depends on glutamate 290, which acts as the Proton donor. Residues histidine 311 and lysine 425 contribute to the active site.

It belongs to the GPI family.

The protein resides in the cytoplasm. It carries out the reaction alpha-D-glucose 6-phosphate = beta-D-fructose 6-phosphate. It functions in the pathway carbohydrate biosynthesis; gluconeogenesis. Its pathway is carbohydrate degradation; glycolysis; D-glyceraldehyde 3-phosphate and glycerone phosphate from D-glucose: step 2/4. Functionally, catalyzes the reversible isomerization of glucose-6-phosphate to fructose-6-phosphate. In Bacillus subtilis (strain 168), this protein is Glucose-6-phosphate isomerase.